The chain runs to 100 residues: NADH-quinone oxidoreductase subunit K (100 aa).

3 helical membrane-spanning segments follow: residues Met1–Gly21, Ile28–Ala48, and Phe64–Phe84.

Belongs to the complex I subunit 4L family. NDH-1 is composed of 14 different subunits. Subunits NuoA, H, J, K, L, M, N constitute the membrane sector of the complex.

It localises to the cell inner membrane. The catalysed reaction is a quinone + NADH + 5 H(+)(in) = a quinol + NAD(+) + 4 H(+)(out). In terms of biological role, NDH-1 shuttles electrons from NADH, via FMN and iron-sulfur (Fe-S) centers, to quinones in the respiratory chain. The immediate electron acceptor for the enzyme in this species is believed to be ubiquinone. Couples the redox reaction to proton translocation (for every two electrons transferred, four hydrogen ions are translocated across the cytoplasmic membrane), and thus conserves the redox energy in a proton gradient. The chain is NADH-quinone oxidoreductase subunit K from Helicobacter pylori (strain B38).